A 295-amino-acid polypeptide reads, in one-letter code: MPQFFLNKRLIILLISIIVLVALVGFSLRDRENASWPEQFVKDVVGFGENIVAKPTSFISGAVDGVVDLKNTYTENQHLKERLEELAQLESEVADLKKENKDLKESLDITDSIRDYDPLNASVISRNPTNWNDQVEIDKGSSDGVKPDMAVTTPSGLIGKVTTTGAKSATVELLTSSDVKNRVSAKVQGKENAFGIINGYDSDTKLLELKQLPYDMKFKKGQKVVTSGLGGKFPAGIFIGTIEKVETDKMGLSQTAFIKPGADMYDLNHVTVLKRSAEAGTTDDDTTSSDTTGGQ.

An N-terminal signal peptide occupies residues 1–34 (MPQFFLNKRLIILLISIIVLVALVGFSLRDRENA). Positions 66 to 112 (VVDLKNTYTENQHLKERLEELAQLESEVADLKKENKDLKESLDITDS) form a coiled coil. The disordered stretch occupies residues 276–295 (SAEAGTTDDDTTSSDTTGGQ).

The protein belongs to the MreC family. As to quaternary structure, homooligomer of 24 subunits, arranged as 12 dimers.

In terms of biological role, involved in formation and maintenance of cell shape. This Listeria monocytogenes serovar 1/2a (strain ATCC BAA-679 / EGD-e) protein is Cell shape-determining protein MreC.